The primary structure comprises 500 residues: Protein SLENDER RICE1-LIKE 2 (500 aa).

The GRAS domain occupies 68–454 (KELEKMALRS…QRLYSASAWR (387 aa)). Residues 75–135 (LRSVNLMVTC…DALAERLFPA (61 aa)) are leucine repeat I (LRI). The tract at residues 154-219 (FRGFYEAGPY…GGPPFLRITG (66 aa)) is VHIID. Positions 185–189 (VHVID) match the VHIID motif. The segment at 233–265 (DVGLRLAEFARSCSVPFAFRGIAADQLDGLRPW) is leucine repeat II (LRII). A PFYRE region spans residues 275–376 (VAINSVLQLH…EAYLQGEIAD (102 aa)). Positions 283–287 (LHRLL) match the LXXLL motif motif. The interval 379 to 454 (SREGSSRVER…QRLYSASAWR (76 aa)) is SAW. A disordered region spans residues 466–500 (SGAADAMEESQNSNTNGGGGGSSGGGHGALNQIMQ). Residues 481 to 493 (NGGGGGSSGGGHG) are compositionally biased toward gly residues.

This sequence belongs to the GRAS family. In terms of tissue distribution, expressed at low levels in leaf blades, leaf sheaths, rachis and flowers. Expressed in the embryo of immature seeds.

Its subcellular location is the nucleus. Probable transcriptional regulator that acts as a repressor of the gibberellin (GA) signaling pathway. Its repressive activity is weaker than that of SLR1. Its overexpression prevents the GA signaling pathway and induces a dwarf phenotype in Arabidopsis thaliana plants. This chain is Protein SLENDER RICE1-LIKE 2, found in Oryza sativa subsp. japonica (Rice).